The following is a 393-amino-acid chain: MASLLARMGNSRRQNAAFMPFAHSMLRALGRSLGPLIANIAERNIQSFSGRAELGPGEETFENWLSQVHEVLPDWPMSEEEKIKRLMRTLRGPAREAMRLFQADNPNLNVAEFLRAMKLLFGASESSITAHGKFLSTLQAQGEKPSLYVIRLEVQLQNAIQAGVLPQSEANRTRLHQLLVGAELSRELRTKLKGLLQMHAHNEQENLPDFLELIRMIREEEDWDETFLRNKRPRRSETVMERAASPVVFQGSLPIVIGSADCNVIEIDDSQDDSDEDVILVEPEDPPLSSPGASSLRGTASTQEEMLIIESPDDFDEESPSTSSGSGQRNNGPGDLGRTRKRKYPIRCPHCGEEGHAKETCDNTSNKGQVFENLIVTLQELTHMERPKPSVPY.

Disordered regions lie at residues 281 to 300 (VEPE…RGTA) and 313 to 341 (DDFD…RTRK). Composition is skewed to polar residues over residues 291 to 300 (PGASSLRGTA) and 320 to 331 (PSTSSGSGQRNN). The CCHC-type zinc-finger motif lies at 346–363 (IRCPHCGEEGHAKETCDN).

It belongs to the ZCCHC12 family.

The chain is Zinc finger CCHC domain-containing protein 18 from Mus musculus (Mouse).